Consider the following 188-residue polypeptide: Ribose 1,5-bisphosphate phosphokinase PhnN (188 aa).

ATP is bound at residue 9 to 16 (GPSGAGKD).

It belongs to the ribose 1,5-bisphosphokinase family.

The catalysed reaction is alpha-D-ribose 1,5-bisphosphate + ATP = 5-phospho-alpha-D-ribose 1-diphosphate + ADP. Its pathway is metabolic intermediate biosynthesis; 5-phospho-alpha-D-ribose 1-diphosphate biosynthesis; 5-phospho-alpha-D-ribose 1-diphosphate from D-ribose 5-phosphate (route II): step 3/3. In terms of biological role, catalyzes the phosphorylation of ribose 1,5-bisphosphate to 5-phospho-D-ribosyl alpha-1-diphosphate (PRPP). In Pectobacterium atrosepticum (strain SCRI 1043 / ATCC BAA-672) (Erwinia carotovora subsp. atroseptica), this protein is Ribose 1,5-bisphosphate phosphokinase PhnN.